We begin with the raw amino-acid sequence, 195 residues long: Probable septum site-determining protein MinC (195 aa).

The protein belongs to the MinC family. As to quaternary structure, interacts with MinD and FtsZ.

Cell division inhibitor that blocks the formation of polar Z ring septums. Rapidly oscillates between the poles of the cell to destabilize FtsZ filaments that have formed before they mature into polar Z rings. Prevents FtsZ polymerization. This Helicobacter pylori (strain G27) protein is Probable septum site-determining protein MinC.